Reading from the N-terminus, the 607-residue chain is Phosphatidylinositol 4-kinase LSB6 (607 aa).

Residues Asn-73–Asn-88 are compositionally biased toward polar residues. A disordered region spans residues Asn-73 to Leu-93. The PI3K/PI4K catalytic domain maps to Gly-161–Ile-522. Residues Ile-167–Gly-173 are G-loop. A disordered region spans residues Lys-318 to Asn-356. Positions Ser-319–Thr-330 are enriched in basic and acidic residues. Residues Ser-341 to Thr-351 show a composition bias toward polar residues. A catalytic loop region spans residues Arg-384 to Asn-392. The segment at Ala-411 to Tyr-431 is activation loop.

It belongs to the PI3/PI4-kinase family. Interacts with LAS17. The cofactor is Mg(2+). Requires Mn(2+) as cofactor.

The protein resides in the cell membrane. It localises to the vacuole membrane. It carries out the reaction a 1,2-diacyl-sn-glycero-3-phospho-(1D-myo-inositol) + ATP = a 1,2-diacyl-sn-glycero-3-phospho-(1D-myo-inositol 4-phosphate) + ADP + H(+). May play a role in endocytic and/or exocytic pathways. The protein is Phosphatidylinositol 4-kinase LSB6 (LSB6) of Saccharomyces cerevisiae (strain ATCC 204508 / S288c) (Baker's yeast).